Here is a 63-residue protein sequence, read N- to C-terminus: MGRIRQTFIKRAGEDLVEKYEDRLTTDFETNKKVIDEVAEIATKRLRNRVAGYVTKKMKKVDA.

Belongs to the eukaryotic ribosomal protein eS17 family.

The chain is Small ribosomal subunit protein eS17 from Methanococcus aeolicus (strain ATCC BAA-1280 / DSM 17508 / OCM 812 / Nankai-3).